Here is a 343-residue protein sequence, read N- to C-terminus: Sodium/bile acid cotransporter 7 (343 aa).

Over 1–10 (MGLLERLRKE) the chain is Cytoplasmic. A helical membrane pass occupies residues 11–31 (WFIVGIILVIAAAKLEPTIGG). At 32 to 37 (KGGPLK) the chain is on the extracellular side. The helical transmembrane segment at 38-58 (PEITITYIAVSAIFFNSGLSL) threads the bilayer. Topologically, residues 59 to 71 (KTEELTNALMHVK) are cytoplasmic. The chain crosses the membrane as a helical span at residues 72–92 (LHLFVQLFTLVFFPTAIWVFL). Residues 93 to 116 (QVLSLTPINEWLLKGLQTVSCMPP) are Extracellular-facing. A helical membrane pass occupies residues 117–137 (PVSSAVILTKAVGGNEAAAIF). Residue Asn138 is a topological domain, cytoplasmic. Residues 139–159 (SAFGSFLGIVVTPLLLLLFLG) form a helical membrane-spanning segment. Residues 160–163 (SSSS) are Extracellular-facing. Residues 164–184 (VPFTSIFSQLFMTVVVPLIIG) traverse the membrane as a helical segment. Residues 185 to 201 (QIVRRYIKDWLERKKPP) lie on the Cytoplasmic side of the membrane. The chain crosses the membrane as a helical span at residues 202-222 (FGAISSCVLLMIIYTTFCDTF). Topologically, residues 223–234 (SNPNIDLDTFSL) are extracellular. A helical transmembrane segment spans residues 235–255 (VIIVFIIFFIQLAFMLLTFLF). Over 256 to 270 (STSKNTGFTPADTVA) the chain is Cytoplasmic. Residues 271 to 291 (IVFCSTHKSLTLGIPMLKIVF) traverse the membrane as a helical segment. Residues 292–298 (AGYEHLS) are Extracellular-facing. The helical transmembrane segment at 299–319 (LISVPLLIYHPAQILLGSVLV) threads the bilayer. At 320–343 (PTIKSWMLSRQKALKLTRQPKVPL) the chain is on the cytoplasmic side.

It belongs to the bile acid:sodium symporter (BASS) (TC 2.A.28) family.

The protein resides in the cell membrane. Its subcellular location is the endoplasmic reticulum membrane. It localises to the golgi apparatus membrane. In terms of biological role, involved in teeth and skeletal development. Has an essential role in the biosynthesis and trafficking of glycosaminoglycans and glycoproteins to produce a proper functioning extracellular matrix. Required for extracellular matrix mineralization. Also involved in the regulation of cellular calcium homeostasis. Does not show transport activity towards bile acids or steroid sulfates. The chain is Sodium/bile acid cotransporter 7 (slc10a7) from Xenopus tropicalis (Western clawed frog).